The chain runs to 576 residues: Sulfite reductase [NADPH] hemoprotein beta-component (576 aa).

Residues Cys-435, Cys-441, Cys-480, and Cys-484 each coordinate [4Fe-4S] cluster. Cys-484 serves as a coordination point for siroheme.

This sequence belongs to the nitrite and sulfite reductase 4Fe-4S domain family. As to quaternary structure, alpha(8)-beta(8). The alpha component is a flavoprotein, the beta component is a hemoprotein. It depends on siroheme as a cofactor. The cofactor is [4Fe-4S] cluster.

The catalysed reaction is hydrogen sulfide + 3 NADP(+) + 3 H2O = sulfite + 3 NADPH + 4 H(+). Its pathway is sulfur metabolism; hydrogen sulfide biosynthesis; hydrogen sulfide from sulfite (NADPH route): step 1/1. Its function is as follows. Component of the sulfite reductase complex that catalyzes the 6-electron reduction of sulfite to sulfide. This is one of several activities required for the biosynthesis of L-cysteine from sulfate. The polypeptide is Sulfite reductase [NADPH] hemoprotein beta-component (Photorhabdus laumondii subsp. laumondii (strain DSM 15139 / CIP 105565 / TT01) (Photorhabdus luminescens subsp. laumondii)).